We begin with the raw amino-acid sequence, 178 residues long: Cytidylate kinase (178 aa).

7–15 lines the ATP pocket; that stretch reads GLPGTGTTT.

The protein belongs to the cytidylate kinase family. Type 2 subfamily.

The protein resides in the cytoplasm. It catalyses the reaction CMP + ATP = CDP + ADP. It carries out the reaction dCMP + ATP = dCDP + ADP. The polypeptide is Cytidylate kinase (Methanococcus maripaludis (strain DSM 14266 / JCM 13030 / NBRC 101832 / S2 / LL)).